Here is a 342-residue protein sequence, read N- to C-terminus: GTPase Obg (342 aa).

The region spanning 1 to 159 is the Obg domain; that stretch reads MKFLDLCKVY…RTIWLRLKLI (159 aa). Residues 160-327 enclose the OBG-type G domain; the sequence is ADAGLLGLPN…VLRALWAEID (168 aa). GTP is bound by residues 166-173, 191-195, 212-215, 279-282, and 308-310; these read GLPNAGKS, FTTLV, DIPG, NKID, and SGV. Mg(2+)-binding residues include serine 173 and threonine 193.

The protein belongs to the TRAFAC class OBG-HflX-like GTPase superfamily. OBG GTPase family. In terms of assembly, monomer. Requires Mg(2+) as cofactor.

The protein resides in the cytoplasm. In terms of biological role, an essential GTPase which binds GTP, GDP and possibly (p)ppGpp with moderate affinity, with high nucleotide exchange rates and a fairly low GTP hydrolysis rate. Plays a role in control of the cell cycle, stress response, ribosome biogenesis and in those bacteria that undergo differentiation, in morphogenesis control. The protein is GTPase Obg of Cereibacter sphaeroides (strain KD131 / KCTC 12085) (Rhodobacter sphaeroides).